The chain runs to 181 residues: Probable mitochondrial import inner membrane translocase subunit tim-17B.1 (181 aa).

Transmembrane regions (helical) follow at residues 17 to 37, 61 to 81, and 109 to 129; these read IGSA…FGGY, GVQF…LVAI, and VMAG…GVGL. The segment at 137 to 181 is disordered; that stretch reads AMMDPTQPPPEALDDPRSLGQKSQAEPGLDQTRPFGIPTGLPNLS.

It belongs to the Tim17/Tim22/Tim23 family.

The protein resides in the mitochondrion inner membrane. In terms of biological role, essential component of the TIM23 complex, a complex that mediates the translocation of transit peptide-containing proteins across the mitochondrial inner membrane. This Caenorhabditis elegans protein is Probable mitochondrial import inner membrane translocase subunit tim-17B.1.